A 439-amino-acid polypeptide reads, in one-letter code: Chitinase-like protein Idgf1 (439 aa).

The first 20 residues, 1–20 (MRFQLFYILGLLSVTSLTHA), serve as a signal peptide directing secretion. The GH18 domain occupies 22-439 (SNLICYYDSN…ILRSIKYFMG (418 aa)). Cys26 and Cys53 are joined by a disulfide. Residues Asn122, Asn218, and Asn346 are each glycosylated (N-linked (GlcNAc...) asparagine). Cys340 and Cys423 are joined by a disulfide.

The protein belongs to the glycosyl hydrolase 18 family. IDGF subfamily. Primarily expressed in yolk cells and fat body. In larvae, it is expressed in large salivary gland cells and weakly expressed in imaginal disks. Less expressed than Idgf2 and Idgf4.

The protein localises to the secreted. Functionally, cooperates with insulin-like peptides to stimulate the proliferation, polarization and motility of imaginal disk cells. May act by stabilizing the binding of insulin-like peptides to its receptor through a simultaneous interaction with both molecules to form a multiprotein signaling complex. The chain is Chitinase-like protein Idgf1 (Idgf1) from Drosophila melanogaster (Fruit fly).